The primary structure comprises 350 residues: Putative aminopeptidase MJ0555 (350 aa).

The a divalent metal cation site is built by His62 and Asp175. Glu207 acts as the Proton acceptor in catalysis. A divalent metal cation contacts are provided by Glu208, Asp230, and His321.

This sequence belongs to the peptidase M42 family. A divalent metal cation is required as a cofactor.

The polypeptide is Putative aminopeptidase MJ0555 (Methanocaldococcus jannaschii (strain ATCC 43067 / DSM 2661 / JAL-1 / JCM 10045 / NBRC 100440) (Methanococcus jannaschii)).